Consider the following 78-residue polypeptide: Major outer membrane lipoprotein Lpp (78 aa).

Residues 1–20 (MKATKLVLGAVILGSTLLAG) form the signal peptide. A lipid anchor (N-palmitoyl cysteine) is attached at C21. A lipid anchor (S-diacylglycerol cysteine) is attached at C21. Repeats lie at residues 24–34 (NAKIDQLSSDV) and 38–48 (NAKVDQLSNDV). Positions 27–75 (IDQLSSDVQTLNAKVDQLSNDVNAMRSDVQAAKDDAARANQRLDNMATK) form a coiled coil. K78 is modified (N6-murein peptidoglycan lysine).

It belongs to the Lpp family. Homotrimer.

The protein localises to the cell outer membrane. It localises to the secreted. It is found in the cell wall. Its function is as follows. A highly abundant outer membrane lipoprotein that controls the distance between the inner and outer membranes. The only protein known to be covalently linked to the peptidoglycan network (PGN). Also non-covalently binds the PGN. The link between the cell outer membrane and PGN contributes to maintenance of the structural and functional integrity of the cell envelope, and maintains the correct distance between the PGN and the outer membrane. The protein is Major outer membrane lipoprotein Lpp of Shigella flexneri.